We begin with the raw amino-acid sequence, 267 residues long: Acyl-[acyl-carrier-protein]--UDP-N-acetylglucosamine O-acyltransferase (267 aa).

This sequence belongs to the transferase hexapeptide repeat family. LpxA subfamily. In terms of assembly, homotrimer.

The protein resides in the cytoplasm. It carries out the reaction a (3R)-hydroxyacyl-[ACP] + UDP-N-acetyl-alpha-D-glucosamine = a UDP-3-O-[(3R)-3-hydroxyacyl]-N-acetyl-alpha-D-glucosamine + holo-[ACP]. The protein operates within glycolipid biosynthesis; lipid IV(A) biosynthesis; lipid IV(A) from (3R)-3-hydroxytetradecanoyl-[acyl-carrier-protein] and UDP-N-acetyl-alpha-D-glucosamine: step 1/6. In terms of biological role, involved in the biosynthesis of lipid A, a phosphorylated glycolipid that anchors the lipopolysaccharide to the outer membrane of the cell. The protein is Acyl-[acyl-carrier-protein]--UDP-N-acetylglucosamine O-acyltransferase of Cupriavidus metallidurans (strain ATCC 43123 / DSM 2839 / NBRC 102507 / CH34) (Ralstonia metallidurans).